Consider the following 372-residue polypeptide: Probable arabinan endo-1,5-alpha-L-arabinosidase B (372 aa).

A signal peptide spans 1-16; sequence MTVLVALFCLVTWTLC. The segment covering 23-34 has biased composition (low complexity); it reads STQGTQQPQQPE. Residues 23 to 52 form a disordered region; sequence STQGTQQPQQPEKTPHPHPQPEDAFPPTHA. The active-site Proton acceptor is the Asp-59. An N-linked (GlcNAc...) asparagine glycan is attached at Asn-120. Glu-252 functions as the Proton donor in the catalytic mechanism. N-linked (GlcNAc...) asparagine glycosylation occurs at Asn-363.

This sequence belongs to the glycosyl hydrolase 43 family.

It is found in the secreted. The enzyme catalyses Endohydrolysis of (1-&gt;5)-alpha-arabinofuranosidic linkages in (1-&gt;5)-arabinans.. Its pathway is glycan metabolism; L-arabinan degradation. Functionally, endo-1,5-alpha-L-arabinanase involved in degradation of pectin. Its preferred substrate is linear 1,5-alpha-L-arabinan. This chain is Probable arabinan endo-1,5-alpha-L-arabinosidase B (abnB), found in Aspergillus fumigatus (strain ATCC MYA-4609 / CBS 101355 / FGSC A1100 / Af293) (Neosartorya fumigata).